The sequence spans 865 residues: Leucine--tRNA ligase (865 aa).

The short motif at 36-46 is the 'HIGH' region element; it reads PYPSGKIHMGH. The short motif at 608 to 612 is the 'KMSKS' region element; sequence KMSKS. K611 contacts ATP.

This sequence belongs to the class-I aminoacyl-tRNA synthetase family.

It localises to the cytoplasm. It catalyses the reaction tRNA(Leu) + L-leucine + ATP = L-leucyl-tRNA(Leu) + AMP + diphosphate. This chain is Leucine--tRNA ligase, found in Wolbachia sp. subsp. Brugia malayi (strain TRS).